Here is a 145-residue protein sequence, read N- to C-terminus: Deoxyuridine 5'-triphosphate nucleotidohydrolase (145 aa).

Residues 62–64 (RSG), N75, 79–81 (TVD), and K89 contribute to the substrate site.

This sequence belongs to the dUTPase family. It depends on Mg(2+) as a cofactor.

The enzyme catalyses dUTP + H2O = dUMP + diphosphate + H(+). It participates in pyrimidine metabolism; dUMP biosynthesis; dUMP from dCTP (dUTP route): step 2/2. Its function is as follows. This enzyme is involved in nucleotide metabolism: it produces dUMP, the immediate precursor of thymidine nucleotides and it decreases the intracellular concentration of dUTP so that uracil cannot be incorporated into DNA. This is Deoxyuridine 5'-triphosphate nucleotidohydrolase from Helicobacter pylori (strain ATCC 700392 / 26695) (Campylobacter pylori).